The sequence spans 279 residues: 3-methyl-2-oxobutanoate hydroxymethyltransferase (279 aa).

Mg(2+)-binding residues include Asp44 and Asp83. 3-methyl-2-oxobutanoate contacts are provided by residues 44–45 (DS), Asp83, and Lys112. Glu114 contributes to the Mg(2+) binding site. The Proton acceptor role is filled by Glu181.

It belongs to the PanB family. In terms of assembly, homodecamer; pentamer of dimers. It depends on Mg(2+) as a cofactor.

It is found in the cytoplasm. It carries out the reaction 3-methyl-2-oxobutanoate + (6R)-5,10-methylene-5,6,7,8-tetrahydrofolate + H2O = 2-dehydropantoate + (6S)-5,6,7,8-tetrahydrofolate. Its pathway is cofactor biosynthesis; coenzyme A biosynthesis. In terms of biological role, catalyzes the reversible reaction in which hydroxymethyl group from 5,10-methylenetetrahydrofolate is transferred onto alpha-ketoisovalerate to form ketopantoate. In Nitrosopumilus maritimus (strain SCM1), this protein is 3-methyl-2-oxobutanoate hydroxymethyltransferase.